The chain runs to 538 residues: Fusion glycoprotein F0 (538 aa).

Positions 1–18 (MDVRICLLLFLISNPSSC) are cleaved as a signal peptide. The Extracellular segment spans residues 19–489 (IQETYNEESC…LLGADAKSKA (471 aa)). Cystine bridges form between C28–C407, C60–C182, C283–C311, C292–C301, C326–C335, C350–C361, and C384–C390. Residue N57 is glycosylated (N-linked (GlcNAc...) asparagine; by host). 2 fusion peptide regions span residues 103–124 (FVLGAIALGVATAAAVTAGVAL) and 103–127 (FVLGAIALGVATAAAVTAGVALAKT). Residues 125–153 (AKTIRLEGEVKAIKNALRNTNEAVSTLGN) adopt a coiled-coil conformation. N353 carries N-linked (GlcNAc...) asparagine; by host glycosylation. Positions 459–484 (ALDQVFESIDRSQDLIDKSNDLLGAD) form a coiled coil. The helical transmembrane segment at 490-510 (GIAIAIVVLVILGIFFLLAVI) threads the bilayer. The Cytoplasmic portion of the chain corresponds to 511-538 (YYCSRVRKTKPKHDYPATTGHSSMAYVS). Residue C513 is the site of S-palmitoyl cysteine; by host attachment.

This sequence belongs to the paramyxoviruses fusion glycoprotein family. As to quaternary structure, homotrimer. Heterodimer with fusion protein F2; disulfide-linked. As a heterodimer with F2, interacts with host heparan sulfate. Part of a complex composed of F1, F2 and G glycoproteins. In terms of assembly, homotrimer. Heterodimer with fusion protein F1; disulfide-linked. As a heterodimer with F1, interacts with host heparan sulfate. Part of a complex composed of F1, F2 and G glycoproteins. Post-translationally, the F glycoprotein is synthesized as a F0 inactive precursor that is heavily N-glycosylated and processed.

It localises to the host Golgi apparatus membrane. The protein localises to the virion membrane. It is found in the host cell membrane. Its function is as follows. Inactive precursor that is cleaved to give rise to the mature F1 and F2 fusion glycoproteins. In terms of biological role, class I viral fusion protein. Under the current model, the protein has at least 3 conformational states: pre-fusion native state, pre-hairpin intermediate state, and post-fusion hairpin state. During viral and plasma cell membrane fusion, the coiled coil regions assume a trimer-of-hairpins structure, positioning the fusion peptide in close proximity to the C-terminal region of the ectodomain. The formation of this structure appears to drive apposition and subsequent fusion of viral and cellular membranes leading to delivery of the nucleocapsid into the cytoplasm. This fusion is pH independent and occurs at the plasma or endosomal membrane. The trimer of F1-F2 (F protein) also facilitates the attachment to host cell by binding to host heparan sulfate. Functionally, major determinant of the species specificity of RSV infection. The trimer of F1-F2 (F protein) also facilitates the attachment to host cell by binding to host heparan sulfate. The sequence is that of Fusion glycoprotein F0 (F) from Meleagris gallopavo (Wild turkey).